The sequence spans 153 residues: Arachidonate 5-lipoxygenase-activating protein (153 aa).

At 1 to 8 (MDQETVGN) the chain is on the lumenal side. A helical membrane pass occupies residues 9 to 30 (VVLLAIVTLISVVQNGFFAHKV). Residues 31 to 52 (EHESRTQNGRSFQRTGTLAFER) lie on the Cytoplasmic side of the membrane. A helical transmembrane segment spans residues 53–77 (VYTANQNCVDAYPTFLAVLWSAGLL). The Lumenal portion of the chain corresponds to 78 to 80 (CSQ). A helical membrane pass occupies residues 81–102 (VPAAFAGLMYLLVRQKYFVGYL). The Cytoplasmic segment spans residues 103–107 (GERTQ). The stretch at 108–115 (STPGYIFG) is an intramembrane region. Residues 116 to 128 (KRIILFLFLMSVA) form a helical membrane-spanning segment. Topologically, residues 129-153 (GIFNYYLIFFFGSDFENYIKTVTTT) are lumenal.

It belongs to the MAPEG family. In terms of assembly, homotrimer. Interacts with LTC4S and ALOX5.

It is found in the nucleus membrane. The protein resides in the endoplasmic reticulum membrane. In terms of biological role, required for leukotriene biosynthesis by ALOX5 (5-lipoxygenase). Anchors ALOX5 to the membrane. Binds arachidonic acid, and could play an essential role in the transfer of arachidonic acid to ALOX5. Binds to MK-886, a compound that blocks the biosynthesis of leukotrienes. This chain is Arachidonate 5-lipoxygenase-activating protein (ALOX5AP), found in Macaca mulatta (Rhesus macaque).